The chain runs to 442 residues: Thymidine phosphorylase (442 aa).

The protein belongs to the thymidine/pyrimidine-nucleoside phosphorylase family. As to quaternary structure, homodimer.

The catalysed reaction is thymidine + phosphate = 2-deoxy-alpha-D-ribose 1-phosphate + thymine. The protein operates within pyrimidine metabolism; dTMP biosynthesis via salvage pathway; dTMP from thymine: step 1/2. Functionally, the enzymes which catalyze the reversible phosphorolysis of pyrimidine nucleosides are involved in the degradation of these compounds and in their utilization as carbon and energy sources, or in the rescue of pyrimidine bases for nucleotide synthesis. This is Thymidine phosphorylase from Vibrio vulnificus (strain CMCP6).